The chain runs to 367 residues: Probable butyrate kinase (367 aa).

This sequence belongs to the acetokinase family.

It is found in the cytoplasm. It carries out the reaction butanoate + ATP = butanoyl phosphate + ADP. This is Probable butyrate kinase from Bacillus cereus (strain B4264).